We begin with the raw amino-acid sequence, 230 residues long: ATP synthase subunit a (230 aa).

6 helical membrane-spanning segments follow: residues 16–36 (LVLF…WLSI), 73–93 (WVSA…LGLL), 106–126 (TYSI…YLAF), 142–162 (LIPF…IALG), 165–185 (LAAN…AIWT), and 192–212 (IASI…GVAC).

This sequence belongs to the ATPase A chain family. In terms of assembly, F-type ATPases have 2 components, CF(1) - the catalytic core - and CF(0) - the membrane proton channel. CF(1) has five subunits: alpha(3), beta(3), gamma(1), delta(1), epsilon(1). CF(0) has three main subunits: a, b and c.

The protein localises to the mitochondrion inner membrane. Functionally, mitochondrial membrane ATP synthase (F(1)F(0) ATP synthase or Complex V) produces ATP from ADP in the presence of a proton gradient across the membrane which is generated by electron transport complexes of the respiratory chain. F-type ATPases consist of two structural domains, F(1) - containing the extramembraneous catalytic core and F(0) - containing the membrane proton channel, linked together by a central stalk and a peripheral stalk. During catalysis, ATP synthesis in the catalytic domain of F(1) is coupled via a rotary mechanism of the central stalk subunits to proton translocation. Key component of the proton channel; it may play a direct role in the translocation of protons across the membrane. In Patiria pectinifera (Starfish), this protein is ATP synthase subunit a (ATP6).